The following is a 372-amino-acid chain: Heat-inducible transcription repressor HrcA (372 aa).

Residues 296–331 form a disordered region; sequence VSSGYGRSGEAGEPAGNDPVGEPETESETESQTNDM.

The protein belongs to the HrcA family.

Its function is as follows. Negative regulator of class I heat shock genes (grpE-dnaK-dnaJ and groELS operons). Prevents heat-shock induction of these operons. The protein is Heat-inducible transcription repressor HrcA of Bifidobacterium longum subsp. infantis (strain ATCC 15697 / DSM 20088 / JCM 1222 / NCTC 11817 / S12).